A 337-amino-acid polypeptide reads, in one-letter code: Phosphate acyltransferase (337 aa).

The protein belongs to the PlsX family. Homodimer. Probably interacts with PlsY.

Its subcellular location is the cytoplasm. It catalyses the reaction a fatty acyl-[ACP] + phosphate = an acyl phosphate + holo-[ACP]. It participates in lipid metabolism; phospholipid metabolism. In terms of biological role, catalyzes the reversible formation of acyl-phosphate (acyl-PO(4)) from acyl-[acyl-carrier-protein] (acyl-ACP). This enzyme utilizes acyl-ACP as fatty acyl donor, but not acyl-CoA. The polypeptide is Phosphate acyltransferase (Aromatoleum aromaticum (strain DSM 19018 / LMG 30748 / EbN1) (Azoarcus sp. (strain EbN1))).